Reading from the N-terminus, the 449-residue chain is Probable secreted beta-glucosidase ARB_04747 (449 aa).

Positions 1–21 (MKFSSGILSLAVAASVQSVQA) are cleaved as a signal peptide. Residue N57 is glycosylated (N-linked (GlcNAc...) asparagine). The interval 96–185 (SPPACPAPSY…RPFPDGEIDC (90 aa)) is disordered. The segment covering 98 to 125 (PACPAPSYVPSPPAAPSSPPAAPQPPSK) has biased composition (pro residues). Over residues 131–150 (EEPKKPEEPKKPEGPKKPEG) the composition is skewed to basic and acidic residues.

It belongs to the SUN family.

Its subcellular location is the secreted. It is found in the cell wall. Its function is as follows. Cell surface beta-glucosidase involved in cytokinesis, cell wall biogenesis, adhesion to host tissue; thus playing an important role in the host-pathogen interaction. Has hydrolytic activity on linear (1-&gt;3)-beta-D-glucans such as laminaribiose and other laminarioligosaccharides. This chain is Probable secreted beta-glucosidase ARB_04747, found in Arthroderma benhamiae (strain ATCC MYA-4681 / CBS 112371) (Trichophyton mentagrophytes).